The chain runs to 265 residues: Mlc titration factor A (265 aa).

His111, His148, His152, and Glu211 together coordinate Zn(2+).

This sequence belongs to the MtfA family. As to quaternary structure, interacts with Mlc. Requires Zn(2+) as cofactor.

It is found in the cytoplasm. Functionally, involved in the modulation of the activity of the glucose-phosphotransferase system (glucose-PTS). Interacts with the transcriptional repressor Mlc, preventing its interaction with DNA and leading to the modulation of expression of genes regulated by Mlc, including ptsG, which encodes the PTS system glucose-specific EIICB component. Its function is as follows. Shows zinc-dependent metallopeptidase activity. The sequence is that of Mlc titration factor A from Escherichia coli O7:K1 (strain IAI39 / ExPEC).